The following is a 444-amino-acid chain: Porin AaxA (444 aa).

Positions M1–A19 are cleaved as a signal peptide. A disordered region spans residues K42–L68. Low complexity predominate over residues Q46–S56.

This sequence belongs to the OprB family.

It localises to the cell outer membrane. Functionally, facilitates L-arginine uptake, as part of the AaxABC system. The arginine uptake by the bacterium in the macrophage may be a virulence factor against the host innate immune response. This Chlamydia felis (strain Fe/C-56) (Chlamydophila felis) protein is Porin AaxA (aaxA).